A 561-amino-acid chain; its full sequence is Proline--tRNA ligase (561 aa).

Belongs to the class-II aminoacyl-tRNA synthetase family. ProS type 1 subfamily. As to quaternary structure, homodimer.

It localises to the cytoplasm. It carries out the reaction tRNA(Pro) + L-proline + ATP = L-prolyl-tRNA(Pro) + AMP + diphosphate. In terms of biological role, catalyzes the attachment of proline to tRNA(Pro) in a two-step reaction: proline is first activated by ATP to form Pro-AMP and then transferred to the acceptor end of tRNA(Pro). As ProRS can inadvertently accommodate and process non-cognate amino acids such as alanine and cysteine, to avoid such errors it has two additional distinct editing activities against alanine. One activity is designated as 'pretransfer' editing and involves the tRNA(Pro)-independent hydrolysis of activated Ala-AMP. The other activity is designated 'posttransfer' editing and involves deacylation of mischarged Ala-tRNA(Pro). The misacylated Cys-tRNA(Pro) is not edited by ProRS. The protein is Proline--tRNA ligase of Wigglesworthia glossinidia brevipalpis.